Here is a 202-residue protein sequence, read N- to C-terminus: Small ribosomal subunit protein uS4c (202 aa).

The segment at 20–43 is disordered; it reads GLTRKTTRRNSRPGQHGDQPRKPS. Residues 90-152 form the S4 RNA-binding domain; sequence MRLDNIVFRL…ARSKQLVENY (63 aa).

This sequence belongs to the universal ribosomal protein uS4 family. Part of the 30S ribosomal subunit. Contacts protein S5. The interaction surface between S4 and S5 is involved in control of translational fidelity.

It localises to the plastid. Its subcellular location is the chloroplast. In terms of biological role, one of the primary rRNA binding proteins, it binds directly to 16S rRNA where it nucleates assembly of the body of the 30S subunit. With S5 and S12 plays an important role in translational accuracy. This Rhodomonas salina (Cryptomonas salina) protein is Small ribosomal subunit protein uS4c (rps4).